The sequence spans 83 residues: Putative membrane protein insertion efficiency factor (83 aa).

Belongs to the UPF0161 family.

Its subcellular location is the cell membrane. In terms of biological role, could be involved in insertion of integral membrane proteins into the membrane. This Staphylococcus saprophyticus subsp. saprophyticus (strain ATCC 15305 / DSM 20229 / NCIMB 8711 / NCTC 7292 / S-41) protein is Putative membrane protein insertion efficiency factor.